The sequence spans 163 residues: Phosphopantetheine adenylyltransferase (163 aa).

Ser10 serves as a coordination point for substrate. Residues 10–11 and His18 contribute to the ATP site; that span reads SF. Substrate is bound by residues Lys42, Leu78, and Lys92. ATP-binding positions include 93–95, Glu103, and 127–133; these read GVR and HAHVSSS.

The protein belongs to the bacterial CoaD family. In terms of assembly, homohexamer. It depends on Mg(2+) as a cofactor.

The protein resides in the cytoplasm. The catalysed reaction is (R)-4'-phosphopantetheine + ATP + H(+) = 3'-dephospho-CoA + diphosphate. It participates in cofactor biosynthesis; coenzyme A biosynthesis; CoA from (R)-pantothenate: step 4/5. In terms of biological role, reversibly transfers an adenylyl group from ATP to 4'-phosphopantetheine, yielding dephospho-CoA (dPCoA) and pyrophosphate. This Clavibacter michiganensis subsp. michiganensis (strain NCPPB 382) protein is Phosphopantetheine adenylyltransferase.